Reading from the N-terminus, the 185-residue chain is Putative manganese efflux pump MntP (185 aa).

6 helical membrane-spanning segments follow: residues 6–26, 41–61, 65–85, 107–127, 132–152, and 164–184; these read IFII…ACGL, FHFG…GLTV, VETY…GKMI, LVFL…SFSI, IAFP…FGLW, and SHIA…KLLL.

It belongs to the MntP (TC 9.B.29) family.

The protein localises to the cell inner membrane. Probably functions as a manganese efflux pump. This Maridesulfovibrio salexigens (strain ATCC 14822 / DSM 2638 / NCIMB 8403 / VKM B-1763) (Desulfovibrio salexigens) protein is Putative manganese efflux pump MntP.